Reading from the N-terminus, the 396-residue chain is Tryptophan synthase beta chain (396 aa).

Lys86 carries the post-translational modification N6-(pyridoxal phosphate)lysine.

The protein belongs to the TrpB family. Tetramer of two alpha and two beta chains. It depends on pyridoxal 5'-phosphate as a cofactor.

The catalysed reaction is (1S,2R)-1-C-(indol-3-yl)glycerol 3-phosphate + L-serine = D-glyceraldehyde 3-phosphate + L-tryptophan + H2O. It functions in the pathway amino-acid biosynthesis; L-tryptophan biosynthesis; L-tryptophan from chorismate: step 5/5. Its function is as follows. The beta subunit is responsible for the synthesis of L-tryptophan from indole and L-serine. The sequence is that of Tryptophan synthase beta chain from Erwinia tasmaniensis (strain DSM 17950 / CFBP 7177 / CIP 109463 / NCPPB 4357 / Et1/99).